The primary structure comprises 401 residues: Ufm1-specific protease 2 (401 aa).

Residues cysteine 234, aspartate 358, and histidine 360 contribute to the active site.

This sequence belongs to the peptidase C78 family.

It is found in the endoplasmic reticulum. Its subcellular location is the cytoplasm. It localises to the nucleus. Thiol-dependent isopeptidase that specifically cleaves UFM1, a ubiquitin-like modifier protein, from conjugated proteins. While it is also able to mediate the processing of UFM1 precursors, a prerequisite for conjugation reactions, ufsp2 mainly acts as a protein deUFMylase that mediates deconjugation of UFM1 from target proteins. The chain is Ufm1-specific protease 2 from Danio rerio (Zebrafish).